A 160-amino-acid polypeptide reads, in one-letter code: 17.9 kDa class II heat shock protein (160 aa).

Positions 44-160 (DARAMAATPA…KPKTIQVQVA (117 aa)) constitute a sHSP domain.

This sequence belongs to the small heat shock protein (HSP20) family.

The protein localises to the cytoplasm. The protein is 17.9 kDa class II heat shock protein (HSP17.9) of Helianthus annuus (Common sunflower).